A 275-amino-acid polypeptide reads, in one-letter code: Secreted RxLR effector protein 153 (275 aa).

The signal sequence occupies residues 1 to 27; that stretch reads MRNRAFLFGLFFIEYACLVLFAAPTRA. A glycan (N-linked (GlcNAc...) asparagine) is linked at asparagine 45. Positions 48 to 63 match the RxLR-dEER motif; the sequence is RTLQADDSKRISAEER.

This sequence belongs to the RxLR effector family.

Its subcellular location is the secreted. It localises to the host cell membrane. Its function is as follows. Secreted effector that completely suppresses the host cell death induced by cell death-inducing proteins. The protein is Secreted RxLR effector protein 153 of Plasmopara viticola (Downy mildew of grapevine).